A 283-amino-acid polypeptide reads, in one-letter code: Nucleoid occlusion protein (283 aa).

A DNA-binding region (H-T-H motif) is located at residues 142 to 161 (ESLAQRLGKGQSTIANKLRL).

It belongs to the ParB family.

The protein localises to the cytoplasm. It is found in the nucleoid. Functionally, effects nucleoid occlusion by binding relatively nonspecifically to DNA and preventing the assembly of the division machinery in the vicinity of the nucleoid, especially under conditions that disturb the cell cycle. It helps to coordinate cell division and chromosome segregation by preventing the formation of the Z ring through the nucleoid, which would cause chromosome breakage. This is Nucleoid occlusion protein from Shouchella clausii (strain KSM-K16) (Alkalihalobacillus clausii).